The primary structure comprises 348 residues: MDYRELTARERQILGIIIQSYVVSAAPVGSKYIARHYNLGLSDATIRNVMAELEELGFISQPHTSAGRVPTDKGYRYYVDLIMTVKTLDEQEKQRFEQHITPLERKGTSADVLLSAVKVLGTISRQLSVVLSPTLSNALFEKLDMVLLSSTRMMVIISIQSLFVKTIVMELHMQVSRQMLDEVVDVLNERLSGLTLSEIRRSINQRLADCSCDNELKNLIVRSAGTLFDEMPVFERLYISGTEYLVEQPEFQQPEKVRDLITMLEDKFSVATLVEQHHANNPDVTITIGKEHGKRQAEDLTVLSAPYYVGDMVGTVGILGPKRMDYEHAVRILHYMAGSLSSTLSIQN.

The protein belongs to the HrcA family.

Its function is as follows. Negative regulator of class I heat shock genes (grpE-dnaK-dnaJ and groELS operons). Prevents heat-shock induction of these operons. This is Heat-inducible transcription repressor HrcA from Chlorobium chlorochromatii (strain CaD3).